Consider the following 545-residue polypeptide: E3 ubiquitin-protein ligase ipaH9.8 (545 aa).

Positions 1–242 are interaction with target proteins; sequence MLPINNNFSL…YHGPRIYFSM (242 aa). 8 LRR repeats span residues 57-77, 78-99, 100-117, 118-139, 140-157, 158-179, 182-203, and 205-228; these read NSDE…NLPA, QITL…PVTL, KKLY…VLPP, ALES…PDSL, LTMN…SLPL, ALKN…SEGN, VVRE…ILNL, and NECS…QRLT. The tract at residues 243–250 is linker; the sequence is SDGQQNTL. Residues 251 to 545 are E3 ubiquitin-protein ligase catalytic domain; the sequence is HRPLADAVTA…SENGSQLHHS (295 aa). The region spanning 253–545 is the NEL domain; that stretch reads PLADAVTAWF…SENGSQLHHS (293 aa). The Glycyl thioester intermediate role is filled by C337.

The protein belongs to the LRR-containing bacterial E3 ligase family. As to quaternary structure, also interacts with human and mouse U2AF1 (U2AF35). Post-translationally, ubiquitinated in the presence of host E1 ubiquitin-activating enzyme, E2 ubiquitin-conjugating enzyme and ubiquitin.

It localises to the secreted. The protein localises to the host cytoplasm. It is found in the host nucleus. The enzyme catalyses S-ubiquitinyl-[E2 ubiquitin-conjugating enzyme]-L-cysteine + [acceptor protein]-L-lysine = [E2 ubiquitin-conjugating enzyme]-L-cysteine + N(6)-ubiquitinyl-[acceptor protein]-L-lysine.. Its activity is regulated as follows. Exists in an autoinhibited state in the absence of substrate protein, due to interactions of the leucine-rich repeats with NEL domain. Is activated upon binding to a substrate protein. Functionally, effector E3 ubiquitin ligase that interferes with host's ubiquitination pathway and modulates the acute inflammatory responses, thus facilitating bacterial colonization within the host cell. Interacts with IKBKG (NEMO) and TNIP1 (ABIN-1), a ubiquitin-binding adapter protein, which results in TNIP1-dependent 'Lys-27'-linked polyubiquitination of IKBKG. Consequently, polyubiquitinated IKBKG undergoes proteasome-dependent degradation, which perturbs NF-kappa-B activation during bacterial infection. Mediates polyubiquitination of host U2AF1, leading to its proteasomal degradation. Catalyzes 'Lys-48'-linked polyubiquitination and subsequent degradation of a subset of host guanylate-binding proteins (GBP1, GBP2, GBP4 and GBP6), thereby suppressing host cell defense. In contrast, host GBP3 and GBP7 are not ubiquitinated by IpaH9.8. Uses UBE2D2 (UBCH5B) as an E2 ubiquitin-conjugating enzyme. This chain is E3 ubiquitin-protein ligase ipaH9.8 (ipaH9.8), found in Shigella boydii serotype 4 (strain Sb227).